The following is a 102-amino-acid chain: Small ribosomal subunit protein uS17 (102 aa).

A compositionally biased stretch (polar residues) spans 1-15 (MTDETASQEASQSTD). A disordered region spans residues 1 to 20 (MTDETASQEASQSTDAAAPA).

This sequence belongs to the universal ribosomal protein uS17 family. In terms of assembly, part of the 30S ribosomal subunit.

Functionally, one of the primary rRNA binding proteins, it binds specifically to the 5'-end of 16S ribosomal RNA. The sequence is that of Small ribosomal subunit protein uS17 from Frankia casuarinae (strain DSM 45818 / CECT 9043 / HFP020203 / CcI3).